A 311-amino-acid polypeptide reads, in one-letter code: MKPRKVMIIGAGNVGTAAAHAFVNQKFVEELILVDLNKERVEGNRKDLADAAAFMPGKMDITVRDASDCADVDIAVITVTAGPLKEGQTRLDELRSTSRIVSGIVPEMMKGGFNGIFLIATNPCDIITYQVWKLSGLPRERVLGTGVWLDTTRLRRLLAEKLDIAAQSIDAFILGEHGDSQFPVWSHSSIYGKPVNEYSLEKLGESLDLKQIGETARDTGFEIYHQKGCTEYGIGGTIVEICRHIFSGSQRALTVSCVLDGEYGESGLAIGVPAVLSQNGVKEIISLKLDEQEQQAFANSVSVIKKSIASI.

Positions 14, 35, and 40 each coordinate NAD(+). Substrate is bound by residues arginine 90 and 122–125 (NPCD). Residues 120–122 (ATN) and threonine 145 each bind NAD(+). Residue 150 to 153 (DTTR) coordinates substrate. Histidine 177 (proton acceptor) is an active-site residue. Threonine 230 provides a ligand contact to substrate.

The protein belongs to the LDH/MDH superfamily. LDH family. In terms of assembly, homotetramer.

It localises to the cytoplasm. It catalyses the reaction (S)-lactate + NAD(+) = pyruvate + NADH + H(+). Its pathway is fermentation; pyruvate fermentation to lactate; (S)-lactate from pyruvate: step 1/1. In terms of biological role, catalyzes the conversion of lactate to pyruvate. This Listeria monocytogenes serovar 1/2a (strain ATCC BAA-679 / EGD-e) protein is L-lactate dehydrogenase 2.